A 409-amino-acid polypeptide reads, in one-letter code: Casein kinase II subunit alpha-1 (409 aa).

The N-terminal stretch at 1-35 is a signal peptide; sequence MIDTLFFLFFLFFDSPLRRLLLLCAVLALRAPTAH. Asn-72 carries N-linked (GlcNAc...) asparagine glycosylation. The Protein kinase domain occupies 110-395; sequence YEVVRKVGRG…AKEAMAHAYF (286 aa). ATP contacts are provided by residues 116–124 and Lys-139; that span reads VGRGKYSEV. An N-linked (GlcNAc...) asparagine glycan is attached at Asn-188. Asp-227 acts as the Proton acceptor in catalysis.

This sequence belongs to the protein kinase superfamily. Ser/Thr protein kinase family. CK2 subfamily. Heterotetramer of two catalytic alpha subunits and two regulatory beta subunits. Seems to be present in all plant organs. But seems to be less expressed than CKA2.

The protein localises to the nucleus. The protein resides in the nucleolus. The enzyme catalyses L-seryl-[protein] + ATP = O-phospho-L-seryl-[protein] + ADP + H(+). It catalyses the reaction L-threonyl-[protein] + ATP = O-phospho-L-threonyl-[protein] + ADP + H(+). Inhibited by heparin. Casein kinases are operationally defined by their preferential utilization of acidic proteins such as caseins as substrates. Phosphorylates casein in vitro. The alpha chain contains the catalytic site. The tetrameric holoenzyme CK2, composed of two alpha and two beta subunits, phosphorylates the transcription factor GBFl, resulting in stimulation of its DNA binding activity. CK2 phosphorylates the transcription factor PIF1 after an exposure to light, resulting in a proteasome-dependent degradation of PIF1 and promotion of photomorphogenesis. CK2 phosphorylates translation initiation factors. May participate in the regulation of the initiation of translation. Acts as a circadian clock component that maintains the correct period length through phosphorylation of CCA1. Required for the maintenance and control of genomic stability and chromatin structure. May act as an ectokinase that phosphorylates several extracellular proteins. The protein is Casein kinase II subunit alpha-1 of Arabidopsis thaliana (Mouse-ear cress).